The following is a 255-amino-acid chain: Phosphate import ATP-binding protein PstB (255 aa).

In terms of domain architecture, ABC transporter spans 9-250 (MYAQGLQFYY…PRNKQTEDYI (242 aa)). ATP is bound at residue 41–48 (GPSGCGKS).

Belongs to the ABC transporter superfamily. Phosphate importer (TC 3.A.1.7) family. In terms of assembly, the complex is composed of two ATP-binding proteins (PstB), two transmembrane proteins (PstC and PstA) and a solute-binding protein (PstS).

It is found in the cell inner membrane. It carries out the reaction phosphate(out) + ATP + H2O = ADP + 2 phosphate(in) + H(+). In terms of biological role, part of the ABC transporter complex PstSACB involved in phosphate import. Responsible for energy coupling to the transport system. The chain is Phosphate import ATP-binding protein PstB from Nitratidesulfovibrio vulgaris (strain ATCC 29579 / DSM 644 / CCUG 34227 / NCIMB 8303 / VKM B-1760 / Hildenborough) (Desulfovibrio vulgaris).